A 61-amino-acid polypeptide reads, in one-letter code: Small ribosomal subunit protein bS21 (61 aa).

Residues 36-61 form a disordered region; that stretch reads EHYESPSVKRKKKAEAARKRKYKYGR. Residues 43 to 61 are compositionally biased toward basic residues; sequence VKRKKKAEAARKRKYKYGR.

Belongs to the bacterial ribosomal protein bS21 family.

The chain is Small ribosomal subunit protein bS21 (rpsU) from Caldanaerobacter subterraneus subsp. tengcongensis (strain DSM 15242 / JCM 11007 / NBRC 100824 / MB4) (Thermoanaerobacter tengcongensis).